Here is a 221-residue protein sequence, read N- to C-terminus: Spore wall protein 3 (221 aa).

An N-terminal signal peptide occupies residues 1–20; the sequence is MVRRSLYFLAVMGVVRSSSG. Positions 150-203 are disordered; sequence ENPASTGSSSTSTCPPKGTAGTTDNKGKAGGAAADDKSKSSSSSSSKKKKKGAK. Over residues 154–173 the composition is skewed to low complexity; the sequence is STGSSSTSTCPPKGTAGTTD. Serine 192 carries the GPI-anchor amidated serine lipid modification. Residues 193 to 221 constitute a propeptide, removed in mature form; it reads SSSKKKKKGAKSLVALGAVATTALFSIVM.

It localises to the spore wall. The protein resides in the membrane. Its subcellular location is the cytoplasm. In terms of biological role, spore wall component. This chain is Spore wall protein 3 (SWP3), found in Encephalitozoon cuniculi (strain GB-M1) (Microsporidian parasite).